The following is a 737-amino-acid chain: Elongation factor 2 (737 aa).

In terms of domain architecture, tr-type G spans 18-262; the sequence is TRVRNIGIIA…AVIKFVPNPR (245 aa). Residues 27-34, 93-97, and 147-150 each bind GTP; these read AHVDHGKT, DTPGH, and NKVD. Residue His604 is modified to Diphthamide.

This sequence belongs to the TRAFAC class translation factor GTPase superfamily. Classic translation factor GTPase family. EF-G/EF-2 subfamily.

It localises to the cytoplasm. Its function is as follows. Catalyzes the GTP-dependent ribosomal translocation step during translation elongation. During this step, the ribosome changes from the pre-translocational (PRE) to the post-translocational (POST) state as the newly formed A-site-bound peptidyl-tRNA and P-site-bound deacylated tRNA move to the P and E sites, respectively. Catalyzes the coordinated movement of the two tRNA molecules, the mRNA and conformational changes in the ribosome. This chain is Elongation factor 2 (fusA), found in Sulfolobus acidocaldarius (strain ATCC 33909 / DSM 639 / JCM 8929 / NBRC 15157 / NCIMB 11770).